An 887-amino-acid polypeptide reads, in one-letter code: MPILLFLIDTSASMNQRSHLGTTYLDTAKGAVETFMKLRARDPASRGDRYMLVTFEEPPYAIKAGWKENHATFMNELKNLQAEGLTTLGQSLRTAFDLLNLNRLVTGIDNYGQGRNPFFLEPAIIITITDGSKLTTTSGVQDELHLPLNSPLPGSELTKEPFRWDQRLFALVLRLPGTMSVESEQLTGVPLDDSAITPMCEVTGGRSYSVCSPRMLNQCLESLVQKVQSGVVINFEKAGPDPSPVEDGQPDISRPFGSQPWHSCHKLIYVRPNPKTGVPIGHWPVPESFWPDQNSPTLPPRTSHPVVKFSCTDCEPMVIDKLPFDKYELEPSPLTQFILERKSPQTCWQVYVSNSAKYSELGHPFGYLKASTALNCVNLFVMPYNYPVLLPLLDDLFKVHKAKPTLKWRQSFESYLKTMPPYYLGPLKKAVRMMGAPNLIADSMEYGLSYSVISYLKKLSQQAKIESDRVIGSVGKKVVQETGIKVRSRSHGLSMAYRKDFQQLLQGISEDVPHRLLDLNMKEYTGFQVALLNKDLKPQTFRNAYDIPRRNLLDHLTRMRSNLLKSTRRFLKGQDEDQVHSVPIAQMGNYQEYLKQVPSPLRELDPDQPRRLHTFGNPFKLDKKGMMIDEADEFVAGPQNKHKRPGEPNMQGIPKRRRCMSPLLRGRQQNPVVNNHIGGKGPPAPTTQAQPDLIKPLPLHKISETTNDSIIHDVVENHVADQLSSDITPNAMDTEFSASSPASLLERPTNHMEALGHDHLGTNDLTVGGFLENHEEPRDKEQCAEENIPASSLNKGKKLMHCRSHEEVNTELKAQIMKEIRKPGRKYERIFTLLKHVQGSLQTRLIFLQNVIKEASRFKKRMLIEQLENFLDEIHRRANQINHINSN.

In terms of domain architecture, VWFA spans 3–227; it reads ILLFLIDTSA…QCLESLVQKV (225 aa). The short motif at 626–633 is the Inhibitory loop element; the sequence is MMIDEADE. Position 804 is a phosphoserine (S804).

Belongs to the Integrator subunit 6 family. Component of the Integrator complex, composed of core subunits INTS1, INTS2, INTS3, INTS4, INTS5, INTS6, INTS7, INTS8, INTS9/RC74, INTS10, INTS11/CPSF3L, INTS12, INTS13, INTS14 and INTS15. The core complex associates with protein phosphatase 2A subunits PPP2CA and PPP2R1A, to form the Integrator-PP2A (INTAC) complex. As to expression, widely expressed. Expressed in heart, brain, placenta, lung, liver, skeletal muscle, kidney and pancreas.

It is found in the nucleus. The protein localises to the chromosome. Component of the integrator complex, a multiprotein complex that terminates RNA polymerase II (Pol II) transcription in the promoter-proximal region of genes. The integrator complex provides a quality checkpoint during transcription elongation by driving premature transcription termination of transcripts that are unfavorably configured for transcriptional elongation: the complex terminates transcription by (1) catalyzing dephosphorylation of the C-terminal domain (CTD) of Pol II subunit POLR2A and SUPT5H/SPT5, (2) degrading the exiting nascent RNA transcript via endonuclease activity and (3) promoting the release of Pol II from bound DNA. The integrator complex is also involved in terminating the synthesis of non-coding Pol II transcripts, such as enhancer RNAs (eRNAs), small nuclear RNAs (snRNAs), telomerase RNAs and long non-coding RNAs (lncRNAs). Within the integrator complex, INTS6 acts as a molecular adapter that promotes assembly of protein phosphatase 2A (PP2A) subunits to the integrator core complex, promoting recruitment of PP2A to transcription pause-release checkpoint. Mediates recruitment of cytoplasmic dynein to the nuclear envelope, probably as component of the integrator complex. May have a tumor suppressor role; an ectopic expression suppressing tumor cell growth. The chain is Integrator complex subunit 6 from Homo sapiens (Human).